The sequence spans 491 residues: Ketol-acid reductoisomerase (NADP(+)) (491 aa).

The KARI N-terminal Rossmann domain maps to 15–208 (AQLGKCRFMG…GGHRAGVLES (194 aa)). NADP(+) contacts are provided by residues 45–48 (CGAQ), R68, R76, S78, and 108–110 (DKQ). The active site involves H132. G158 provides a ligand contact to NADP(+). KARI C-terminal knotted domains are found at residues 209–344 (SFVA…TAPQ) and 345–484 (YEGK…MTDM). Mg(2+) is bound by residues D217, E221, E389, and E393. S414 lines the substrate pocket.

The protein belongs to the ketol-acid reductoisomerase family. Requires Mg(2+) as cofactor.

It catalyses the reaction (2R)-2,3-dihydroxy-3-methylbutanoate + NADP(+) = (2S)-2-acetolactate + NADPH + H(+). It carries out the reaction (2R,3R)-2,3-dihydroxy-3-methylpentanoate + NADP(+) = (S)-2-ethyl-2-hydroxy-3-oxobutanoate + NADPH + H(+). It functions in the pathway amino-acid biosynthesis; L-isoleucine biosynthesis; L-isoleucine from 2-oxobutanoate: step 2/4. The protein operates within amino-acid biosynthesis; L-valine biosynthesis; L-valine from pyruvate: step 2/4. Involved in the biosynthesis of branched-chain amino acids (BCAA). Catalyzes an alkyl-migration followed by a ketol-acid reduction of (S)-2-acetolactate (S2AL) to yield (R)-2,3-dihydroxy-isovalerate. In the isomerase reaction, S2AL is rearranged via a Mg-dependent methyl migration to produce 3-hydroxy-3-methyl-2-ketobutyrate (HMKB). In the reductase reaction, this 2-ketoacid undergoes a metal-dependent reduction by NADPH to yield (R)-2,3-dihydroxy-isovalerate. The sequence is that of Ketol-acid reductoisomerase (NADP(+)) from Escherichia coli O8 (strain IAI1).